A 447-amino-acid polypeptide reads, in one-letter code: Protein TIC 40, chloroplastic (447 aa).

The N-terminal 43 residues, 1-43 (MENLTLVSCSASSPKLLIGCNFTSSLKNPTGFSRRTPNIVLRC), are a transit peptide targeting the chloroplast. The N-terminal 33 residues, 44–76 (SKISASAQSQSPSSRPENTGEIVVVKQRSKAFA), are a transit peptide targeting the chloroplast; inner membrane. At 77–104 (SIFSSSRDQQTTSVASPSVPVPPPSSST) the chain is on the chloroplast intermembrane side. A helical transmembrane segment spans residues 105-125 (IGSPLFWIGVGVGLSALFSYV). At 126 to 447 (TSNLKKYAMQ…ISQLFPGMTG (322 aa)) the chain is on the stromal side. Residues 148-160 (QNSQFNNSGFPSG) show a composition bias toward low complexity. Disordered stretches follow at residues 148-214 (QNSQ…DIEV) and 231-261 (KNYAFEDISPEETTKESPFSNYAEVSETNSP). Pro residues predominate over residues 161-171 (SPFPFPFPPQT). The segment covering 172–186 (SPASSPFQSQSQSSG) has biased composition (low complexity). 2 consecutive STI1 domains span residues 310–344 (DPTVQKMVYPYLPEEMRNPETFKWMLKNPQYRQQL) and 386–425 (PEEVISKIMENPDVAMAFQNPRVQAALMECSENPMNIMKY).

Part of the Tic complex. Interacts with HSP93, TIC110 and LTD. As to expression, expressed in seedlings, flowers, leaves, stems and roots.

It localises to the plastid. It is found in the chloroplast inner membrane. Its function is as follows. Involved in protein precursor import into chloroplasts. Part of the motor complex consisting of a co-chaperone (TIC40) and a chaperone (HSP93) associated with the import channel (TIC110). Causes the release of bound transit peptides from TIC110 and stimulates ATP hydrolysis by HSP93. Involved in reinsertion of proteins from the chloroplast stroma into the inner membrane. This Arabidopsis thaliana (Mouse-ear cress) protein is Protein TIC 40, chloroplastic (TIC40).